We begin with the raw amino-acid sequence, 92 residues long: Plasmid copy control protein CopR (92 aa).

Positions 1-27 (MELAFRESLKKMRGTKSKEKFSQELEM) are enriched in basic and acidic residues. 2 disordered regions span residues 1-40 (MELA…SGKS) and 63-92 (IPNE…NDFV). Residues 9–62 (LKKMRGTKSKEKFSQELEMSRSNYSRIESGKSDPTIKTLEQIVKLTNSTLVVDL) enclose the HTH cro/C1-type domain. Residues 20–39 (KFSQELEMSRSNYSRIESGK) constitute a DNA-binding region (H-T-H motif).

Its function is as follows. Involved in copy control of plasmid pIP501. The polypeptide is Plasmid copy control protein CopR (copR) (Streptococcus agalactiae).